The chain runs to 410 residues: Multifunctional CCA protein (410 aa).

Residues Gly8 and Arg11 each contribute to the ATP site. CTP is bound by residues Gly8 and Arg11. Mg(2+)-binding residues include Glu21 and Asp23. Residues Arg91, Arg137, and Arg140 each coordinate ATP. Positions 91, 137, and 140 each coordinate CTP. An HD domain is found at 228–329 (TLLHQFLCLK…WKLFKSLDIL (102 aa)).

It belongs to the tRNA nucleotidyltransferase/poly(A) polymerase family. Bacterial CCA-adding enzyme type 1 subfamily. In terms of assembly, monomer. Can also form homodimers and oligomers. Requires Mg(2+) as cofactor. It depends on Ni(2+) as a cofactor.

The catalysed reaction is a tRNA precursor + 2 CTP + ATP = a tRNA with a 3' CCA end + 3 diphosphate. It carries out the reaction a tRNA with a 3' CCA end + 2 CTP + ATP = a tRNA with a 3' CCACCA end + 3 diphosphate. In terms of biological role, catalyzes the addition and repair of the essential 3'-terminal CCA sequence in tRNAs without using a nucleic acid template. Adds these three nucleotides in the order of C, C, and A to the tRNA nucleotide-73, using CTP and ATP as substrates and producing inorganic pyrophosphate. tRNA 3'-terminal CCA addition is required both for tRNA processing and repair. Also involved in tRNA surveillance by mediating tandem CCA addition to generate a CCACCA at the 3' terminus of unstable tRNAs. While stable tRNAs receive only 3'-terminal CCA, unstable tRNAs are marked with CCACCA and rapidly degraded. The polypeptide is Multifunctional CCA protein (Alcanivorax borkumensis (strain ATCC 700651 / DSM 11573 / NCIMB 13689 / SK2)).